A 955-amino-acid chain; its full sequence is MEDSSTDTEKEEEEEKDEKDQEPIYAIVPTINIQDERFVDLSETPAFIFLHELHAMGKLPGTRMAALKAKYTLLHDAVMSTQESEVQLLQNAKRFTEQIQQQQFHLQQADNFPEAFSTEVSKMREQLLKYQNEYNAVKEREFHNQYRLNSLKEEKIIIVKEFEKITKPGEMEKKMKILRESTEELRKEIMQKKLEIKNLREDLASKQKQLLKEQKELEELLGHQVVLKDEVAHHQTIPVQIGKEIEKITRKKVEMEKKKIVLEQEVKTLNDSLKKVENKVSAIVDEKENVIKEVEGKRALLEIKEREHNQLVKLLELARENEATSLTERGILDLNLRNSLIDKQNYHDELSRKQREKERDFRNLRKMELLLKVSWDALRQTQALHQRLLLEMEAIPKDDSTLSERRRELHKEVEVAKRNLAQQKIISEMESKLVEQQLAEENKLLKEQENMKELVVNLLRMTQIKIDEKEQKSKDFLKAQQKYTNIVKEMKAKDLEIRIHKKKKCEIYRRLREFAKLYDTIRNERNKFVNLLHKAHQKVNEIKERHKMSLNELEILRNSAVSQERKLQNSMLKHANNVTIRESMQNDVRKIVSKLQEMKEKKEAQLNNIDRLANTITMIEEEMVQLRKRYEKAVQHRNESGVQLIEREEEICIFYEKINIQEKMKLNGEIEIHLLEEKIQFLKMKIAEKQRQICVTQKLLPAKRSLDADLAVLQIQFSQCTDRIKDLEKQFVKPDGENRARFLPGKDLTEKEMIQKLDKLELQLAKKEEKLLEKDFIYEQVSRLTDRLCSKTQGCKQDTLLLAKKMNGYQRRIKNATEKMMALVAELSMKQALTIELQKEVREKEDFIFTCNSRIEKGLPLNKEIEKEWLKVLRDEEMHALAIAEKSQEFLEADNRQLPNGVYTTAEQRPNAYIPEADATLPLPKPYGALAPFKPSEPGANMRHIRKPVIKPVEI.

A compositionally biased stretch (acidic residues) spans 1–17 (MEDSSTDTEKEEEEEKD). Residues 1–22 (MEDSSTDTEKEEEEEKDEKDQE) are disordered. Coiled-coil stretches lie at residues 114-141 (EAFSTEVSKMREQLLKYQNEYNAVKERE), 169-321 (GEME…AREN), 400-461 (STLS…LLRM), 534-640 (KAHQ…RNES), and 667-832 (NGEI…MKQA).

Interacts with CCDC38 and CCDC42. Interacts with intraflagellar transport proteins IFT20 and IFT88. In terms of assembly, (Microbial infection) Interacts with Chlamydia trachomatis incM/YT288. In host cells infected with C.trachomatis incM, CCDC146 is recruited to the periphery of the pathogen-containing vacuole but recruitment is not dependent on incM. Widely expressed.

Its subcellular location is the cytoplasm. The protein resides in the cytoskeleton. The protein localises to the microtubule organizing center. It is found in the centrosome. It localises to the centriole. Its subcellular location is the flagellum axoneme. The protein resides in the cilium basal body. The protein localises to the midbody. Functionally, essential for sperm flagellum biogenesis and male fertility. This chain is Coiled-coil domain-containing protein 146 (CCDC146), found in Homo sapiens (Human).